Here is a 111-residue protein sequence, read N- to C-terminus: Phosphoribosyl-ATP pyrophosphatase (111 aa).

This sequence belongs to the PRA-PH family.

It localises to the cytoplasm. The catalysed reaction is 1-(5-phospho-beta-D-ribosyl)-ATP + H2O = 1-(5-phospho-beta-D-ribosyl)-5'-AMP + diphosphate + H(+). It participates in amino-acid biosynthesis; L-histidine biosynthesis; L-histidine from 5-phospho-alpha-D-ribose 1-diphosphate: step 2/9. The polypeptide is Phosphoribosyl-ATP pyrophosphatase (hisE) (Azospirillum brasilense).